A 387-amino-acid polypeptide reads, in one-letter code: 3-ketoacyl-CoA thiolase (387 aa).

Catalysis depends on Cys91, which acts as the Acyl-thioester intermediate. Residues His343 and Cys373 each act as proton acceptor in the active site.

It belongs to the thiolase-like superfamily. Thiolase family. Heterotetramer of two alpha chains (FadB) and two beta chains (FadA).

The protein localises to the cytoplasm. It carries out the reaction an acyl-CoA + acetyl-CoA = a 3-oxoacyl-CoA + CoA. The protein operates within lipid metabolism; fatty acid beta-oxidation. Catalyzes the final step of fatty acid oxidation in which acetyl-CoA is released and the CoA ester of a fatty acid two carbons shorter is formed. In Shewanella loihica (strain ATCC BAA-1088 / PV-4), this protein is 3-ketoacyl-CoA thiolase.